Reading from the N-terminus, the 313-residue chain is Pseudouridine kinase (313 aa).

The protein belongs to the carbohydrate kinase PfkB family.

The enzyme catalyses pseudouridine + ATP = psi-UMP + ADP + H(+). Functionally, catalyzes the phosphorylation of pseudouridine to pseudouridine 5'-phosphate (PsiMP). This Escherichia coli (strain K12) protein is Pseudouridine kinase (psuK).